Here is a 921-residue protein sequence, read N- to C-terminus: Probable dipeptidyl-aminopeptidase B (921 aa).

Residues 1 to 87 (MDAPATASRQ…EADTNDLETG (87 aa)) are disordered. Residues 1 to 108 (MDAPATASRQ…RVGVDRGLKK (108 aa)) lie on the Cytoplasmic side of the membrane. The segment covering 22–33 (SSLSTVSTTSLV) has biased composition (low complexity). Over residues 35 to 45 (DRLHEHNEKSY) the composition is skewed to basic and acidic residues. Residues 66–75 (PDDDDDDDES) are compositionally biased toward acidic residues. A helical; Signal-anchor for type II membrane protein membrane pass occupies residues 109 to 129 (VILILAAAFLFAWGAALFVFL). The Vacuolar portion of the chain corresponds to 130-921 (SNKSYKHAST…KPIVEPKARV (792 aa)). N-linked (GlcNAc...) asparagine glycans are attached at residues Asn-131, Asn-364, and Asn-577. Ser-768 serves as the catalytic Charge relay system. The N-linked (GlcNAc...) asparagine glycan is linked to Asn-827. Active-site charge relay system residues include Asp-845 and His-878.

It belongs to the peptidase S9B family.

The protein localises to the vacuole membrane. The enzyme catalyses Release of an N-terminal dipeptide, Xaa-Yaa-|-Zaa-, from a polypeptide, preferentially when Yaa is Pro, provided Zaa is neither Pro nor hydroxyproline.. Its function is as follows. Type IV dipeptidyl-peptidase which removes N-terminal dipeptides sequentially from polypeptides having unsubstituted N-termini provided that the penultimate residue is proline. In Colletotrichum graminicola (strain M1.001 / M2 / FGSC 10212) (Maize anthracnose fungus), this protein is Probable dipeptidyl-aminopeptidase B (DAPB).